The primary structure comprises 433 residues: MFTRLITTSVLTGAIALTIGSQAFAQTELAWWHGMTGANNEMVNELSKEFNESQSEYKIVPVYKGNYPETLNAGIAAFRSKQPPAILQVFDAGSGVMMAAEGAIVPAAEVLEKGGYKFDKSQYLPGIVAYYSKPDGTMLSFPYNSSSPILYYNKDAFKKAGLDENKPPKTWPEVFEAAKKIKASGASPCGFTSTWLTWIQTENFAAWNNVPYGTNENGLAGTDVKLEINSPLYVEHFQAIADLAKDGTFRYGGRTSEAKQLFTSGECAMLTESSGGLGDVVKSGINYGIGQLPYYEGHGPQNTIPGGASLWVFAGLSDDQYKGIAEFFNFLSQTKIQVKLHEKSGYLPVTLAAYEETKKSDFYEKNPGRETPILQMMGKEPTENSKGVRLVNLPQVRDILNEEFEAMLGGKQDAKTALDNAVKRGNAAIAAAQ.

The signal sequence occupies residues 1–25; it reads MFTRLITTSVLTGAIALTIGSQAFA. Sn-glycerol 3-phosphate contacts are provided by Tyr67, Asp91, Ser146, Ser273, Gly307, Tyr346, and Arg397.

Belongs to the bacterial solute-binding protein 1 family. As to quaternary structure, the complex is composed of two ATP-binding proteins (UgpC), two transmembrane proteins (UgpA and UgpE) and a solute-binding protein (UgpB).

It is found in the periplasm. Part of the ABC transporter complex UgpBAEC involved in sn-glycerol-3-phosphate (G3P) import. Binds G3P. This chain is sn-glycerol-3-phosphate-binding periplasmic protein UgpB (ugpB), found in Brucella abortus (strain 2308).